The chain runs to 189 residues: Adenine phosphoribosyltransferase (189 aa).

Belongs to the purine/pyrimidine phosphoribosyltransferase family. In terms of assembly, homodimer.

The protein localises to the cytoplasm. The catalysed reaction is AMP + diphosphate = 5-phospho-alpha-D-ribose 1-diphosphate + adenine. It functions in the pathway purine metabolism; AMP biosynthesis via salvage pathway; AMP from adenine: step 1/1. Functionally, catalyzes a salvage reaction resulting in the formation of AMP, that is energically less costly than de novo synthesis. This Frankia alni (strain DSM 45986 / CECT 9034 / ACN14a) protein is Adenine phosphoribosyltransferase.